Reading from the N-terminus, the 446-residue chain is Tubulin beta-1 chain (446 aa).

GTP contacts are provided by Gln11, Glu69, Ser138, Gly142, Thr143, Gly144, Asn204, and Asn226. Residue Glu69 coordinates Mg(2+). Residues 422 to 446 form a disordered region; that stretch reads YQQYQDATADEEGEYEDEEEGDLQD. Acidic residues predominate over residues 429–446; the sequence is TADEEGEYEDEEEGDLQD.

Belongs to the tubulin family. As to quaternary structure, dimer of alpha and beta chains. A typical microtubule is a hollow water-filled tube with an outer diameter of 25 nm and an inner diameter of 15 nM. Alpha-beta heterodimers associate head-to-tail to form protofilaments running lengthwise along the microtubule wall with the beta-tubulin subunit facing the microtubule plus end conferring a structural polarity. Microtubules usually have 13 protofilaments but different protofilament numbers can be found in some organisms and specialized cells. It depends on Mg(2+) as a cofactor. As to expression, found in areas of rapidly dividing tissues.

It localises to the cytoplasm. The protein resides in the cytoskeleton. Functionally, tubulin is the major constituent of microtubules, a cylinder consisting of laterally associated linear protofilaments composed of alpha- and beta-tubulin heterodimers. Microtubules grow by the addition of GTP-tubulin dimers to the microtubule end, where a stabilizing cap forms. Below the cap, tubulin dimers are in GDP-bound state, owing to GTPase activity of alpha-tubulin. This is Tubulin beta-1 chain (TUBB1) from Zea mays (Maize).